The primary structure comprises 402 residues: Probable 2,3-bisphosphoglycerate-independent phosphoglycerate mutase (402 aa).

Belongs to the BPG-independent phosphoglycerate mutase family. A-PGAM subfamily.

The enzyme catalyses (2R)-2-phosphoglycerate = (2R)-3-phosphoglycerate. Its pathway is carbohydrate degradation; glycolysis; pyruvate from D-glyceraldehyde 3-phosphate: step 3/5. Catalyzes the interconversion of 2-phosphoglycerate and 3-phosphoglycerate. The protein is Probable 2,3-bisphosphoglycerate-independent phosphoglycerate mutase of Thermosipho melanesiensis (strain DSM 12029 / CIP 104789 / BI429).